The chain runs to 378 residues: MDLIGLLKSQFLCHLVFCYVFIASGLIVNAIQLCTLVIWPINKQLFRKINARLCYCVSSQLVMLLEWWSGTECTIYTDPKACPHYGKENAIVVLNHKFEIDFLCGWSLAERLGILGNSKVLAKKELAYVPIIGWMWYFVEMIFCTRKWEQDRQTVAKSLLHLRDYPEKYLFLIHCEGTRFTEKKHQISMQVAQAKGLPSLKHHLLPRTKGFAITVKCLRDVVPAVYDCTLNFRNNENPTLLGVLNGKKYHADCYVRRIPMEDIPEDEDKCSAWLHKLYQEKDAFQEEYYRTGVFPETPWVPPRRPWSLVNWLFWASLLLYPFFQFLVSMVSSGSSVTLASLVLIFCMASMGVRWMIGVTEIDKGSAYGNIDNKRKQTD.

A helical transmembrane segment spans residues Phe11 to Ile31. Residues His96–Asp101 carry the HXXXXD motif motif. Transmembrane regions (helical) follow at residues Glu125 to Thr145, Trp311 to Ser331, and Leu338 to Val358.

Belongs to the 1-acyl-sn-glycerol-3-phosphate acyltransferase family. In terms of tissue distribution, expressed at a high levels in the brain, at intermediate or low levels in skeletal muscles, gut, kidney, spleen and lung. Barely detectable in heart and liver.

The protein resides in the endoplasmic reticulum membrane. The enzyme catalyses a 1-acyl-sn-glycero-3-phosphate + an acyl-CoA = a 1,2-diacyl-sn-glycero-3-phosphate + CoA. The catalysed reaction is (4Z,7Z,10Z,13Z,16Z,19Z)-docosahexaenoyl-CoA + 1-hexadecanoyl-sn-glycero-3-phosphate = 1-hexadecanoyl-2-(4Z,7Z,10Z,13Z,16Z,19Z-docosahexaenoyl)-sn-glycero-3-phosphate + CoA. It carries out the reaction 1-octadecanoyl-sn-glycero-3-phosphate + (9Z,12Z)-octadecadienoyl-CoA = 1-octadecanoyl-2-(9Z,12Z-octadecadienoyl)-sn-glycero-3-phosphate + CoA. It catalyses the reaction 1-octadecanoyl-sn-glycero-3-phosphate + (4Z,7Z,10Z,13Z,16Z,19Z)-docosahexaenoyl-CoA = 1-octadecanoyl-2-(4Z,7Z,10Z,13Z,16Z,19Z-docosahexaenoyl)-sn-glycero-3-phosphate + CoA. The enzyme catalyses (4Z,7Z,10Z,13Z,16Z,19Z)-docosahexaenoyl-CoA + 1-(9Z-octadecenoyl)-sn-glycero-3-phosphate = 1-(9Z-octadecenoyl)-2-(4Z,7Z,10Z,13Z,16Z,19Z-docosahexaenoyl)-sn-glycero-3-phosphate + CoA. Its pathway is phospholipid metabolism; CDP-diacylglycerol biosynthesis; CDP-diacylglycerol from sn-glycerol 3-phosphate: step 2/3. In terms of biological role, converts 1-acyl-sn-glycerol-3-phosphate (lysophosphatidic acid or LPA) into 1,2-diacyl-sn-glycerol-3-phosphate (phosphatidic acid or PA) by incorporating an acyl moiety at the sn-2 position of the glycerol backbone. Exhibits high acyl-CoA specificity for polyunsaturated fatty acyl-CoA, especially docosahexaenoyl-CoA (22:6-CoA, DHA-CoA). This chain is 1-acyl-sn-glycerol-3-phosphate acyltransferase delta (Agpat4), found in Mus musculus (Mouse).